Consider the following 669-residue polypeptide: DNA ligase (669 aa).

Residues D33–D37, S82–L83, and E114 each bind NAD(+). Catalysis depends on K116, which acts as the N6-AMP-lysine intermediate. The NAD(+) site is built by R137, E174, K291, and K315. Zn(2+) contacts are provided by C409, C412, C427, and C433. A BRCT domain is found at E593–L669.

It belongs to the NAD-dependent DNA ligase family. LigA subfamily. Mg(2+) serves as cofactor. The cofactor is Mn(2+).

The catalysed reaction is NAD(+) + (deoxyribonucleotide)n-3'-hydroxyl + 5'-phospho-(deoxyribonucleotide)m = (deoxyribonucleotide)n+m + AMP + beta-nicotinamide D-nucleotide.. In terms of biological role, DNA ligase that catalyzes the formation of phosphodiester linkages between 5'-phosphoryl and 3'-hydroxyl groups in double-stranded DNA using NAD as a coenzyme and as the energy source for the reaction. It is essential for DNA replication and repair of damaged DNA. The polypeptide is DNA ligase (Vibrio vulnificus (strain CMCP6)).